A 90-amino-acid polypeptide reads, in one-letter code: RNA-binding protein Hfq (90 aa).

Residues 10–70 form the Sm domain; that stretch reads DGFLNLLRRE…LSTITPARPL (61 aa).

The protein belongs to the Hfq family. Homohexamer.

Its function is as follows. RNA chaperone that binds small regulatory RNA (sRNAs) and mRNAs to facilitate mRNA translational regulation in response to envelope stress, environmental stress and changes in metabolite concentrations. Also binds with high specificity to tRNAs. The polypeptide is RNA-binding protein Hfq (Symbiobacterium thermophilum (strain DSM 24528 / JCM 14929 / IAM 14863 / T)).